Reading from the N-terminus, the 360-residue chain is D-alanine--D-alanine ligase (360 aa).

Residues 146–352 (KICAEHAGLH…FSQLIDRLLQ (207 aa)) form the ATP-grasp domain. Residue 179–234 (LEEFTLPFFVKPASQGSSIGITKVHRPEELAAALEKAFMVDTKVLIEKTIEGREIE) participates in ATP binding. Mg(2+)-binding residues include Asp-305, Glu-319, and Asn-321.

It belongs to the D-alanine--D-alanine ligase family. The cofactor is Mg(2+). Mn(2+) is required as a cofactor.

The protein resides in the cytoplasm. It carries out the reaction 2 D-alanine + ATP = D-alanyl-D-alanine + ADP + phosphate + H(+). Its pathway is cell wall biogenesis; peptidoglycan biosynthesis. Its function is as follows. Cell wall formation. The protein is D-alanine--D-alanine ligase of Prosthecochloris aestuarii (strain DSM 271 / SK 413).